The primary structure comprises 455 residues: Pentatricopeptide repeat-containing protein At3g26630, chloroplastic (455 aa).

A chloroplast-targeting transit peptide spans 1–19; that stretch reads MAAPSPSSPPNLLSPPPFR. PPR repeat units follow at residues 51 to 81, 82 to 117, 118 to 152, 153 to 187, 188 to 214, 215 to 249, 250 to 284, 285 to 315, 316 to 350, 352 to 387, and 388 to 418; these read DQLL…LQSP, STFT…QSQF, DKFT…GFFN, DVFF…SIVS, WTTM…MPMR, NVVS…DVKP, NEFT…GFVL, DCFL…MQGK, SLAT…ASVE, DAIT…GISP, and IREH…MDSD.

This sequence belongs to the PPR family. PCMP-A subfamily.

It is found in the plastid. The protein localises to the chloroplast. This is Pentatricopeptide repeat-containing protein At3g26630, chloroplastic (PCMP-A6) from Arabidopsis thaliana (Mouse-ear cress).